A 479-amino-acid chain; its full sequence is ATP synthase subunit beta (479 aa).

158–165 (GGAGLGKT) provides a ligand contact to ATP.

Belongs to the ATPase alpha/beta chains family. F-type ATPases have 2 components, CF(1) - the catalytic core - and CF(0) - the membrane proton channel. CF(1) has five subunits: alpha(3), beta(3), gamma(1), delta(1), epsilon(1). CF(0) has three main subunits: a(1), b(2) and c(9-12). The alpha and beta chains form an alternating ring which encloses part of the gamma chain. CF(1) is attached to CF(0) by a central stalk formed by the gamma and epsilon chains, while a peripheral stalk is formed by the delta and b chains.

The protein localises to the cell inner membrane. It carries out the reaction ATP + H2O + 4 H(+)(in) = ADP + phosphate + 5 H(+)(out). In terms of biological role, produces ATP from ADP in the presence of a proton gradient across the membrane. The catalytic sites are hosted primarily by the beta subunits. In Rhodopirellula baltica (strain DSM 10527 / NCIMB 13988 / SH1), this protein is ATP synthase subunit beta.